The primary structure comprises 494 residues: Guanosine-5'-triphosphate,3'-diphosphate pyrophosphatase (494 aa).

The protein belongs to the GppA/Ppx family. GppA subfamily.

The enzyme catalyses guanosine 3'-diphosphate 5'-triphosphate + H2O = guanosine 3',5'-bis(diphosphate) + phosphate + H(+). It functions in the pathway purine metabolism; ppGpp biosynthesis; ppGpp from GTP: step 2/2. Catalyzes the conversion of pppGpp to ppGpp. Guanosine pentaphosphate (pppGpp) is a cytoplasmic signaling molecule which together with ppGpp controls the 'stringent response', an adaptive process that allows bacteria to respond to amino acid starvation, resulting in the coordinated regulation of numerous cellular activities. This is Guanosine-5'-triphosphate,3'-diphosphate pyrophosphatase from Shigella flexneri.